A 365-amino-acid polypeptide reads, in one-letter code: 2-aminoethylphosphonate--pyruvate transaminase (365 aa).

Lys-194 carries the N6-(pyridoxal phosphate)lysine modification.

The protein belongs to the class-V pyridoxal-phosphate-dependent aminotransferase family. PhnW subfamily. As to quaternary structure, homodimer. Pyridoxal 5'-phosphate serves as cofactor.

It catalyses the reaction (2-aminoethyl)phosphonate + pyruvate = phosphonoacetaldehyde + L-alanine. In terms of biological role, involved in phosphonate degradation. In Bacillus cytotoxicus (strain DSM 22905 / CIP 110041 / 391-98 / NVH 391-98), this protein is 2-aminoethylphosphonate--pyruvate transaminase.